Reading from the N-terminus, the 396-residue chain is Adenosine deaminase 1 (396 aa).

The disordered stretch occupies residues 1 to 26; sequence MTSRSTEKSAAANPAAVSKTPSPDRI. Positions 35 and 37 each coordinate Zn(2+). Substrate contacts are provided by His37, Asp39, and Gly197. His224 is a Zn(2+) binding site. Catalysis depends on Glu227, which acts as the Proton donor. Zn(2+) is bound at residue Asp316.

Belongs to the metallo-dependent hydrolases superfamily. Adenosine and AMP deaminases family. Adenosine deaminase subfamily. In terms of assembly, homotetramer. Zn(2+) is required as a cofactor.

It catalyses the reaction adenosine + H2O + H(+) = inosine + NH4(+). It carries out the reaction 2'-deoxyadenosine + H2O + H(+) = 2'-deoxyinosine + NH4(+). With respect to regulation, coformycin and 2'-deoxycoformycin, whose structures mimic the transition state of the deamination reaction, are potent competitive inhibitors. Functionally, catalyzes the hydrolytic deamination of adenosine and 2-deoxyadenosine. This chain is Adenosine deaminase 1, found in Streptomyces coelicolor (strain ATCC BAA-471 / A3(2) / M145).